The sequence spans 377 residues: uncharacterized protein (377 aa).

The next 2 membrane-spanning stretches (helical) occupy residues 71 to 91 and 140 to 160; these read IIAT…LVGS and AEAA…PTLF.

Its subcellular location is the membrane. This is an uncharacterized protein from Coxiella burnetii (strain RSA 493 / Nine Mile phase I).